A 145-amino-acid polypeptide reads, in one-letter code: 3-dehydroquinate dehydratase (145 aa).

Y24 acts as the Proton acceptor in catalysis. Residues N75, H81, and D88 each contribute to the substrate site. H101 functions as the Proton donor in the catalytic mechanism. Substrate is bound by residues 102–103 (IS) and R112.

The protein belongs to the type-II 3-dehydroquinase family. In terms of assembly, homododecamer.

The enzyme catalyses 3-dehydroquinate = 3-dehydroshikimate + H2O. It functions in the pathway metabolic intermediate biosynthesis; chorismate biosynthesis; chorismate from D-erythrose 4-phosphate and phosphoenolpyruvate: step 3/7. Catalyzes a trans-dehydration via an enolate intermediate. The polypeptide is 3-dehydroquinate dehydratase (Corynebacterium glutamicum (strain R)).